Consider the following 290-residue polypeptide: Phosphatidylglycerol--prolipoprotein diacylglyceryl transferase (290 aa).

The next 7 helical transmembrane spans lie at 21–41 (VSLH…MWLA), 60–80 (LLYA…VLFY), 96–116 (WDGG…MLWF), 124–144 (FFQV…AGRL), 199–219 (SQLY…NVFI), 226–246 (GSVS…VECF), and 260–280 (ISMG…MMIW). Residue R143 participates in a 1,2-diacyl-sn-glycero-3-phospho-(1'-sn-glycerol) binding.

This sequence belongs to the Lgt family.

It is found in the cell inner membrane. The catalysed reaction is L-cysteinyl-[prolipoprotein] + a 1,2-diacyl-sn-glycero-3-phospho-(1'-sn-glycerol) = an S-1,2-diacyl-sn-glyceryl-L-cysteinyl-[prolipoprotein] + sn-glycerol 1-phosphate + H(+). Its pathway is protein modification; lipoprotein biosynthesis (diacylglyceryl transfer). Functionally, catalyzes the transfer of the diacylglyceryl group from phosphatidylglycerol to the sulfhydryl group of the N-terminal cysteine of a prolipoprotein, the first step in the formation of mature lipoproteins. The protein is Phosphatidylglycerol--prolipoprotein diacylglyceryl transferase of Yersinia pseudotuberculosis serotype O:1b (strain IP 31758).